We begin with the raw amino-acid sequence, 266 residues long: Eukaryotic translation initiation factor 3 subunit J (266 aa).

2 disordered regions span residues 1–111 (MAPS…EKDA) and 217–266 (NEKM…DDFM). A compositionally biased stretch (acidic residues) spans 26-44 (DEEEEDVLDSWDAAEDSEV). Residues 40–82 (EDSEVEREKAAKAAEAKAKAEAEAAANKKSKAQRIQEKKAQRK) are a coiled coil. Basic and acidic residues-rich tracts occupy residues 45-61 (EREK…KAEA) and 73-85 (RIQE…KADA). A compositionally biased stretch (acidic residues) spans 86 to 97 (DAEDSDDSDEDE). Composition is skewed to basic and acidic residues over residues 98–111 (AERR…EKDA) and 218–230 (EKMK…DKGN). Acidic residues predominate over residues 254–266 (SYDDDGLDDDDFM).

Belongs to the eIF-3 subunit J family. Component of the eukaryotic translation initiation factor 3 (eIF-3) complex.

It is found in the cytoplasm. In terms of biological role, component of the eukaryotic translation initiation factor 3 (eIF-3) complex, which is involved in protein synthesis of a specialized repertoire of mRNAs and, together with other initiation factors, stimulates binding of mRNA and methionyl-tRNAi to the 40S ribosome. The eIF-3 complex specifically targets and initiates translation of a subset of mRNAs involved in cell proliferation. The protein is Eukaryotic translation initiation factor 3 subunit J (hcr1) of Aspergillus niger (strain ATCC MYA-4892 / CBS 513.88 / FGSC A1513).